Consider the following 217-residue polypeptide: Protein 33K (217 aa).

Residues 1 to 142 (MPPKGNKQAI…KEKTSAIATR (142 aa)) are disordered. The segment covering 24 to 68 (QWDEEEESWDDSQAEEVSDEEEMESWESLDEELEDKPPKDEEEEI) has biased composition (acidic residues). Residues 69–78 (IASAAAPSSK) are compositionally biased toward low complexity. Positions 123 to 136 (KRSEKTTRPRKEKT) are enriched in basic and acidic residues. The interval 160 to 187 (YAIFQQSRGQQLELKVKNRSLRSLTRSC) is necessary for nuclear subcellular location. Positions 166-186 (SRGQQLELKVKNRSLRSLTRS) are RS-repeat; required for splicing enhancer activity.

Belongs to the adenoviridae splicing factor family. Homooligomer. Interacts with DBP; this interaction occurs at a unique vertex during genome packaging. Interacts with IVa2; this interaction occurs at a unique vertex during genome packaging and seems to potentiate IVa2 and 33K oligomerization. Phosphorylated in vitro by human PKA and PRKDC. PRKDC inhibits, whereas PKA activates the splicing factor.

The protein localises to the host nucleus. Its function is as follows. Promotes alternative splicing of late transcripts by promoting splicing at weak 3' splice sites. Required for the temporal activation of major late pre-mRNA splicing at late times of infection. Induces the splicing and expression of the late capsid vertex protein. In terms of biological role, probably functions as the small terminase that is part of the molecular motor that translocates genomic DNA in empty capsid during DNA packaging. This motor is located at a unique vertex and comprises at least the IVa2 ATPase, the small terminase 33K and probably a portal. Forms a ring-like structure of about 17 nm in which genomic DNA is translocated into the capsid. Stimulates IVa2 ATPase activity in the presence of the viral genome. Once the DNA is packaged, the terminase detaches: the 33K protein is present in the empty particles, but not in the mature virions. Also involved in virion assembly. This Human adenovirus F serotype 41 (HAdV-41) protein is Protein 33K.